The chain runs to 723 residues: FACT complex subunit Ssrp1 (723 aa).

Serine 443 is subject to Phosphoserine. 2 disordered regions span residues 459–564 (EARE…AFML) and 586–723 (AKKG…EASD). Composition is skewed to acidic residues over residues 464–478 (EEDDDDGDSDEESTD) and 486–507 (NESDVAEEYDSNVESDSDDDSD). The segment covering 531–557 (KKEKKHKEKERTKKPSKKKKDSGKPKR) has biased composition (basic residues). The HMG box DNA-binding region spans 555–621 (PKRATTAFML…RYHDEMRNYK (67 aa)). A compositionally biased stretch (basic and acidic residues) spans 586–621 (AKKGGEMWKELKDKSKWEDAAAKDKQRYHDEMRNYK). Serine 628 is subject to Phosphoserine. The segment covering 644-656 (PSPSKKANTSGSG) has biased composition (polar residues). 2 positions are modified to phosphoserine: serine 664 and serine 668. Residues 664-676 (SDDDSTSSDDEKD) are compositionally biased toward acidic residues. Position 669 is a phosphothreonine (threonine 669). 2 positions are modified to phosphoserine: serine 670 and serine 671. Basic and acidic residues predominate over residues 677-692 (NEPAKKKSKPPSDGDA). Positions 702 to 723 (EPEESEEDSNASDEDEEDEASD) are enriched in acidic residues.

It belongs to the SSRP1 family. As to quaternary structure, component of the FACT complex, a stable heterodimer of dre4/spt16 and Ssrp. Interacts with CHD1 and TRL/GAGA. In terms of tissue distribution, expressed at highest levels in nurse cells of the ovary.

It is found in the nucleus. The protein resides in the chromosome. Its subcellular location is the nucleolus. Component of the FACT complex, a general chromatin factor that acts to reorganize nucleosomes. The FACT complex is involved in multiple processes that require DNA as a template such as mRNA elongation, DNA replication and DNA repair. During transcription elongation the FACT complex acts as a histone chaperone that both destabilizes and restores nucleosomal structure. It facilitates the passage of RNA polymerase II and transcription by promoting the dissociation of one histone H2A-H2B dimer from the nucleosome, then subsequently promotes the reestablishment of the nucleosome following the passage of RNA polymerase II. Binds specifically to single-stranded DNA and RNA with highest affinity for nucleotides G and U. The FACT complex is required for expression of Hox genes. The chain is FACT complex subunit Ssrp1 (Ssrp) from Drosophila melanogaster (Fruit fly).